The chain runs to 236 residues: Exotoxin type H (236 aa).

An N-terminal signal peptide occupies residues 1–32 (MRYNCRYSHIDKKIYSMIICLSFLLYSNVVQA).

It belongs to the staphylococcal/streptococcal toxin family.

It is found in the secreted. Functionally, mitogenic for human peripheral blood lymphocytes. The protein is Exotoxin type H (speH) of Streptococcus pyogenes serotype M1.